The chain runs to 320 residues: Ferrochelatase (320 aa).

Fe cation-binding residues include His194 and Glu275.

It belongs to the ferrochelatase family. As to quaternary structure, monomer.

The protein resides in the cytoplasm. It carries out the reaction heme b + 2 H(+) = protoporphyrin IX + Fe(2+). It participates in porphyrin-containing compound metabolism; protoheme biosynthesis; protoheme from protoporphyrin-IX: step 1/1. Its function is as follows. Catalyzes the ferrous insertion into protoporphyrin IX. The chain is Ferrochelatase from Salmonella dublin (strain CT_02021853).